The primary structure comprises 732 residues: Polyribonucleotide nucleotidyltransferase (732 aa).

The Mg(2+) site is built by Asp516 and Asp522. A KH domain is found at 582 to 642 (PSSHTITVHP…PKVIAACDYI (61 aa)). In terms of domain architecture, S1 motif spans 659-726 (GDILKGKIKR…KGHKIELGLR (68 aa)).

This sequence belongs to the polyribonucleotide nucleotidyltransferase family. It depends on Mg(2+) as a cofactor.

The protein localises to the cytoplasm. The catalysed reaction is RNA(n+1) + phosphate = RNA(n) + a ribonucleoside 5'-diphosphate. Its function is as follows. Involved in mRNA degradation. Catalyzes the phosphorolysis of single-stranded polyribonucleotides processively in the 3'- to 5'-direction. The polypeptide is Polyribonucleotide nucleotidyltransferase (Nitratiruptor sp. (strain SB155-2)).